The primary structure comprises 103 residues: Small ribosomal subunit protein uS10 (103 aa).

This sequence belongs to the universal ribosomal protein uS10 family. Part of the 30S ribosomal subunit.

Functionally, involved in the binding of tRNA to the ribosomes. This is Small ribosomal subunit protein uS10 from Buchnera aphidicola subsp. Acyrthosiphon pisum (strain 5A).